The primary structure comprises 122 residues: Small ribosomal subunit protein uS13 (122 aa).

The interval 93-122 (RRGLPVRGQRTKTNARTRKGPKKTIAGKKK) is disordered.

It belongs to the universal ribosomal protein uS13 family. In terms of assembly, part of the 30S ribosomal subunit. Forms a loose heterodimer with protein S19. Forms two bridges to the 50S subunit in the 70S ribosome.

In terms of biological role, located at the top of the head of the 30S subunit, it contacts several helices of the 16S rRNA. In the 70S ribosome it contacts the 23S rRNA (bridge B1a) and protein L5 of the 50S subunit (bridge B1b), connecting the 2 subunits; these bridges are implicated in subunit movement. Contacts the tRNAs in the A and P-sites. This chain is Small ribosomal subunit protein uS13, found in Corynebacterium efficiens (strain DSM 44549 / YS-314 / AJ 12310 / JCM 11189 / NBRC 100395).